Consider the following 317-residue polypeptide: Heme-binding protein HMX1 (317 aa).

Over 1 to 289 (MEDSSNTIIP…FNKDSATRRA (289 aa)) the chain is Cytoplasmic. A helical; Anchor for type IV membrane protein transmembrane segment spans residues 290–310 (LHTVMLLVLSIIAIWVLYFLV).

It depends on heme as a cofactor.

The protein localises to the endoplasmic reticulum membrane. Its function is as follows. Plays an important role in the degradation of heme under conditions of iron deprivation. This chain is Heme-binding protein HMX1 (HMX1), found in Saccharomyces cerevisiae (strain ATCC 204508 / S288c) (Baker's yeast).